The following is a 370-amino-acid chain: DNA replication and repair protein RecF (370 aa).

ATP is bound at residue 30–37 (GENAQGKT).

It belongs to the RecF family.

Its subcellular location is the cytoplasm. The RecF protein is involved in DNA metabolism; it is required for DNA replication and normal SOS inducibility. RecF binds preferentially to single-stranded, linear DNA. It also seems to bind ATP. The polypeptide is DNA replication and repair protein RecF (Bacillus velezensis (strain DSM 23117 / BGSC 10A6 / LMG 26770 / FZB42) (Bacillus amyloliquefaciens subsp. plantarum)).